The chain runs to 63 residues: Conotoxin Cl14.11 (63 aa).

The signal sequence occupies residues 1–21 (MRFLLLLTVALLLTCIMETDA). The propeptide occupies 22–34 (EAKPEDLAERFRE).

Post-translationally, contains 2 disulfide bond. As to expression, expressed by the venom duct.

It localises to the secreted. In Californiconus californicus (California cone), this protein is Conotoxin Cl14.11.